The following is a 236-amino-acid chain: Bacterial rhodopsin CSR3 (236 aa).

The Extracellular segment spans residues 1-3; it reads MDA. The chain crosses the membrane as a helical span at residues 4–25; the sequence is VAVVYGITAAGFAVGVAIVGYL. The Cytoplasmic segment spans residues 26–34; it reads YASLEGSEE. A helical transmembrane segment spans residues 35–56; sequence RSILAALALIPGFAGISYVAMA. Residues 57–70 are Extracellular-facing; sequence FGIGTVTIGETTLV. A helical transmembrane segment spans residues 71 to 92; the sequence is GFRYLDWVVTTPLLVGFVGYAA. Topologically, residues 93–95 are cytoplasmic; it reads GAS. A helical transmembrane segment spans residues 96–118; the sequence is RRAIFGVMVADALMILTGVGAVV. Residues 119–122 lie on the Extracellular side of the membrane; that stretch reads ADGT. Residues 123–150 form a helical membrane-spanning segment; it reads LKWVLFGVSTVFHVSLFAYLYLVFPRSV. Residues 151-153 are Cytoplasmic-facing; the sequence is PDD. A helical membrane pass occupies residues 154 to 181; sequence PQRIGLFSLLKNHIGLLWIAYPLVWLAG. Residues 182–189 lie on the Extracellular side of the membrane; the sequence is PEGLGLAT. The chain crosses the membrane as a helical span at residues 190–222; sequence YVGVSITYAFLDLLAKVPYVYFFYARRQVFATK. N6-(retinylidene)lysine is present on lysine 205. The Cytoplasmic portion of the chain corresponds to 223–236; that stretch reads LLRDSGEVTATPAD.

Belongs to the archaeal/bacterial/fungal opsin family.

It is found in the cell membrane. The polypeptide is Bacterial rhodopsin CSR3 (Haloarcula vallismortis (Halobacterium vallismortis)).